The following is a 357-amino-acid chain: Protein ATP1B4 (357 aa).

The Nuclear portion of the chain corresponds to 1-110 (MRRQLRSRRA…FLARTGQSWS (110 aa)). Positions 15–80 (YSYRYRLDDP…EEGQGQPTGN (66 aa)) are disordered. The segment covering 52 to 73 (EEEEEEEEKEEEEEEEKEEEEG) has biased composition (acidic residues). The chain crosses the membrane as a helical; Signal-anchor for type II membrane protein span at residues 111–131 (LILLIYFFFYASLAAVITLCM). Over 132 to 357 (YTLFLTISPY…RVIFTLNIET (226 aa)) the chain is Perinuclear space.

The protein belongs to the X(+)/potassium ATPases subunit beta family. In terms of assembly, associates with a SMAD7-transcriptional complex. Interacts with SNW1 and TOR1AIP1. According to PubMed:17592128, does not associate with known Na,K-ATPase alpha-subunits. Highly expressed in skeletal muscle and at a lower level in heart.

The protein localises to the nucleus inner membrane. Functionally, may act as a transcriptional coregulator during muscle development through its interaction with SNW1. Has lost its ancestral function as a Na,K-ATPase beta-subunit. The protein is Protein ATP1B4 (ATP1B4) of Homo sapiens (Human).